A 1039-amino-acid chain; its full sequence is DIS3-like exonuclease 1 (1039 aa).

In terms of domain architecture, CSD1 spans 221 to 309 (PEHLPLEILE…KGRNGALCEN (89 aa)). In terms of domain architecture, CSD2 spans 359–425 (VLVMPWDYRI…AEIATILVEN (67 aa)). The 350-residue stretch at 458-807 (RLDLRKTHLV…VHRLLLAAVN (350 aa)) folds into the RNB domain.

Belongs to the RNR ribonuclease family. Component of the RNA exosome complex. The cofactor is Mg(2+).

The protein resides in the cytoplasm. The catalysed reaction is Exonucleolytic cleavage in the 3'- to 5'-direction to yield nucleoside 5'-phosphates.. Functionally, catalytic component of the RNA exosome complex which has 3'-&gt;5' exoribonuclease activity and participates in a multitude of cellular RNA processing and degradation events. This Xenopus tropicalis (Western clawed frog) protein is DIS3-like exonuclease 1 (dis3l).